A 473-amino-acid polypeptide reads, in one-letter code: UDP-N-acetylmuramate--L-alanine ligase (473 aa).

112–118 (GTHGKTT) contacts ATP.

This sequence belongs to the MurCDEF family.

Its subcellular location is the cytoplasm. It catalyses the reaction UDP-N-acetyl-alpha-D-muramate + L-alanine + ATP = UDP-N-acetyl-alpha-D-muramoyl-L-alanine + ADP + phosphate + H(+). It participates in cell wall biogenesis; peptidoglycan biosynthesis. In terms of biological role, cell wall formation. The protein is UDP-N-acetylmuramate--L-alanine ligase of Nitrosomonas europaea (strain ATCC 19718 / CIP 103999 / KCTC 2705 / NBRC 14298).